Here is a 64-residue protein sequence, read N- to C-terminus: uncharacterized protein (64 aa).

The N-terminal stretch at 1–26 (MVVKENFCGACLTIPLAFAGAGTAIG) is a signal peptide. The chain crosses the membrane as a helical span at residues 33-53 (IKKWSIVITIISLLLTVWFIY).

It belongs to the IIV-6 010R family.

The protein localises to the host membrane. This is an uncharacterized protein from Aedes vexans (Inland floodwater mosquito).